A 76-amino-acid chain; its full sequence is MNKAFFLCLVVLCAAVVFAAEDLQKGKHAPFKRAAPCFCSGNPGRGDLWILRGPSPGGYGYTSNCYKWPNICCFPP.

Residues 1–19 (MNKAFFLCLVVLCAAVVFA) form the signal peptide. A propeptide spanning residues 20 to 31 (AEDLQKGKHAPF) is cleaved from the precursor. 2 disulfide bridges follow: cysteine 37-cysteine 72 and cysteine 39-cysteine 65.

It belongs to the sea anemone type 3 (BDS) potassium channel toxin family. Post-translationally, lacks the conventional Cys residue at position 55. Thus, only 2 disulfide are possible present. In terms of tissue distribution, experimental results show no expression in the ectodermal tissue from the distal and proximal tentacles, body wall, and oral disk. Since paralogs are expressed in this tissue, an expression of this toxin in this tissue is probable. The negative results could be explained by the very low abundance of EST sequences.

It localises to the secreted. The protein resides in the nematocyst. In terms of biological role, blocks Kv3 voltage-gated potassium channels. Reduces blood pressure. The chain is Kappa-actitoxin-Avd4n from Anemonia viridis (Snakelocks anemone).